The primary structure comprises 139 residues: Trafficking protein particle complex subunit 2-like protein (139 aa).

It belongs to the TRAPP small subunits family. Sedlin subfamily. Component of the multisubunit TRAPP (transport protein particle) complex, which includes at least TRAPPC2, TRAPPC2L, TRAPPC3, TRAPPC3L, TRAPPC4, TRAPPC5, TRAPPC8, TRAPPC9, TRAPPC10, TRAPPC11 and TRAPPC12. Interacts with the heterodimer TRAPPC3-TRAPPC6A.

The protein resides in the cytoplasm. Its subcellular location is the perinuclear region. It is found in the endoplasmic reticulum. The protein localises to the golgi apparatus. Its function is as follows. May play a role in vesicular transport from endoplasmic reticulum to Golgi. This chain is Trafficking protein particle complex subunit 2-like protein (TRAPPC2L), found in Bos taurus (Bovine).